We begin with the raw amino-acid sequence, 93 residues long: Guanine nucleotide-binding protein subunit gamma 1 (93 aa).

The stretch at 12 to 52 (TRGRHRIQAELKKLEQEARFLEEELEELDKTDKVSAALQEL) forms a coiled coil. One can recognise a G protein gamma domain in the interval 20–93 (AELKKLEQEA…DLRRCKCWFL (74 aa)). Cysteine 88 carries S-palmitoyl cysteine lipidation. Position 90 is a cysteine methyl ester (cysteine 90). A lipid anchor (S-farnesyl cysteine) is attached at cysteine 90. Positions 91–93 (WFL) are cleaved as a propeptide — removed in mature form.

As to quaternary structure, g proteins are composed of 3 units, alpha, beta and gamma. Interacts with the beta subunit RGB1.

The protein resides in the cell membrane. Guanine nucleotide-binding proteins (G proteins) are involved as modulators or transducers in various transmembrane signaling systems. The protein is Guanine nucleotide-binding protein subunit gamma 1 of Oryza sativa subsp. indica (Rice).